A 452-amino-acid polypeptide reads, in one-letter code: Retrograde protein of 51 kDa (452 aa).

Basic and acidic residues predominate over residues 1–13 (MQKGAKIEDEGRQ). A disordered region spans residues 1–50 (MQKGAKIEDEGRQSRIQSRNFIIQRSDPRTRGSSVYSSRSSSYNVRSSIS). Residues 1–75 (MQKGAKIEDE…KGNREKEKRE (75 aa)) form a head region. The span at 14 to 23 (SRIQSRNFII) shows a compositional bias: polar residues. Positions 33–50 (SSVYSSRSSSYNVRSSIS) are enriched in low complexity. An IF rod domain is found at 72–424 (EKREMQNLNE…KLLEGEESRV (353 aa)). The tract at residues 76–111 (MQNLNERLASYIEKVHFLDAQVKKLEAENEALRNRK) is coil 1A. A linker 1 region spans residues 112–121 (VEDLQPIRDA). Residues 122–259 (YENELRQARK…DLLDQLELLK (138 aa)) form a coil 1B region. A Sulfoserine modification is found at Ser156. A linker 12 region spans residues 260-278 (PEPIQIKGMDYADFWKSEL). The tract at residues 279 to 424 (AKCVREINLA…KLLEGEESRV (146 aa)) is coil 2. The segment at 425–452 (GLRTLVEQAIGTQSKGSASLKDAIQSSS) is tail.

It belongs to the intermediate filament family.

This Lymnaea stagnalis (Great pond snail) protein is Retrograde protein of 51 kDa (RGP51).